Here is a 205-residue protein sequence, read N- to C-terminus: MIFSMLRKLPKVTCRDVLPEIRAICIEEIGCWMQSYSTSFLTDSYLKYIGWTLHDKHREVRVKCVKALKGLYGNRDLTARLELFTGRFKDWMVSMIVDREYSVAVEAVRLLILILKLFYPECEIRTMGGREQRQSPGAQRTFFQLLLSFFVESKLHDHAAYLVDNLWDCAGTQLKDWEGLTSLLLEKDQSTCHMEPGPGTFHLLG.

An SCD domain is found at 10-95 (PKVTCRDVLP…GRFKDWMVSM (86 aa)).

This sequence belongs to the SCC3 family.

It is found in the nucleus. In Homo sapiens (Human), this protein is Putative STAG3-like protein 1 (STAG3L1).